We begin with the raw amino-acid sequence, 1203 residues long: DNA-directed RNA polymerase subunit beta' (1203 aa).

Zn(2+) contacts are provided by Cys-60, Cys-62, Cys-75, and Cys-78. Residues Asp-449, Asp-451, and Asp-453 each coordinate Mg(2+). The Zn(2+) site is built by Cys-818, Cys-892, Cys-899, and Cys-902.

This sequence belongs to the RNA polymerase beta' chain family. As to quaternary structure, the RNAP catalytic core consists of 2 alpha, 1 beta, 1 beta' and 1 omega subunit. When a sigma factor is associated with the core the holoenzyme is formed, which can initiate transcription. Mg(2+) serves as cofactor. The cofactor is Zn(2+).

The enzyme catalyses RNA(n) + a ribonucleoside 5'-triphosphate = RNA(n+1) + diphosphate. DNA-dependent RNA polymerase catalyzes the transcription of DNA into RNA using the four ribonucleoside triphosphates as substrates. This chain is DNA-directed RNA polymerase subunit beta', found in Bacillus mycoides (strain KBAB4) (Bacillus weihenstephanensis).